Consider the following 376-residue polypeptide: Ribonucleoside-diphosphate reductase subunit beta (376 aa).

3 residues coordinate Fe cation: Asp85, Glu116, and His119. Tyr123 is an active-site residue. Fe cation-binding residues include Glu205, Glu239, and His242.

The protein belongs to the ribonucleoside diphosphate reductase small chain family. In terms of assembly, tetramer of two alpha and two beta subunits. It depends on Fe cation as a cofactor.

It carries out the reaction a 2'-deoxyribonucleoside 5'-diphosphate + [thioredoxin]-disulfide + H2O = a ribonucleoside 5'-diphosphate + [thioredoxin]-dithiol. Its function is as follows. Provides the precursors necessary for DNA synthesis. Catalyzes the biosynthesis of deoxyribonucleotides from the corresponding ribonucleotides. In Buchnera aphidicola subsp. Schizaphis graminum (strain Sg), this protein is Ribonucleoside-diphosphate reductase subunit beta (nrdB).